A 432-amino-acid chain; its full sequence is E3 ubiquitin-protein ligase ATL42 (432 aa).

The first 18 residues, 1 to 18 (MYQIFFFFLPLLHSYASA), serve as a signal peptide directing secretion. A helical transmembrane segment spans residues 37–57 (LAVVTGVLAIMFALTFVLLVY). The RING-type; atypical zinc-finger motif lies at 123–165 (CSVCLSKFESVEILRLLPKCRHAFHIGCIDQWLEQHATCPLCR).

Belongs to the RING-type zinc finger family. ATL subfamily.

Its subcellular location is the membrane. The catalysed reaction is S-ubiquitinyl-[E2 ubiquitin-conjugating enzyme]-L-cysteine + [acceptor protein]-L-lysine = [E2 ubiquitin-conjugating enzyme]-L-cysteine + N(6)-ubiquitinyl-[acceptor protein]-L-lysine.. It participates in protein modification; protein ubiquitination. Its function is as follows. E3 ubiquitin-protein ligase able to catalyze polyubiquitination with ubiquitin-conjugating enzyme E2 UBC8 in vitro. The chain is E3 ubiquitin-protein ligase ATL42 (ATL42) from Arabidopsis thaliana (Mouse-ear cress).